Reading from the N-terminus, the 243-residue chain is BTB/POZ domain-containing protein At4g08455 (243 aa).

Residues 19–51 adopt a coiled-coil conformation; that stretch reads KECYVEAGETEEELKREIDDLKAKVAFLRLSSS. One can recognise a BTB domain in the interval 64–136; sequence TDVVLIASED…LYTAEACLDE (73 aa).

Interacts with CUL3A and CUL3B.

Its pathway is protein modification; protein ubiquitination. In terms of biological role, may act as a substrate-specific adapter of an E3 ubiquitin-protein ligase complex (CUL3-RBX1-BTB) which mediates the ubiquitination and subsequent proteasomal degradation of target proteins. This is BTB/POZ domain-containing protein At4g08455 from Arabidopsis thaliana (Mouse-ear cress).